The primary structure comprises 182 residues: uncharacterized protein (182 aa).

This sequence belongs to the mimivirus L28/L54 family.

This is an uncharacterized protein from Acanthamoeba polyphaga (Amoeba).